The sequence spans 450 residues: Adenosylhomocysteinase (450 aa).

The substrate site is built by Thr59, Asp135, and Glu160. 161–163 (TTT) contacts NAD(+). Residues Lys190 and Asp194 each contribute to the substrate site. Residues Asn195, 224–229 (GFGDVG), Glu247, 303–305 (IGH), and Asn350 each bind NAD(+).

This sequence belongs to the adenosylhomocysteinase family. The cofactor is NAD(+).

It is found in the cytoplasm. The catalysed reaction is S-adenosyl-L-homocysteine + H2O = L-homocysteine + adenosine. Its pathway is amino-acid biosynthesis; L-homocysteine biosynthesis; L-homocysteine from S-adenosyl-L-homocysteine: step 1/1. Its function is as follows. Adenosylhomocysteine is a competitive inhibitor of S-adenosyl-L-methionine-dependent methyl transferase reactions; therefore adenosylhomocysteinase may play a key role in the control of methylations via regulation of the intracellular concentration of adenosylhomocysteine. The protein is Adenosylhomocysteinase (SAH1) of Candida albicans (strain SC5314 / ATCC MYA-2876) (Yeast).